The sequence spans 353 residues: Nif-specific regulatory protein (353 aa).

A Sigma-54 factor interaction domain is found at 12 to 240 (IVGESAALKE…LQNCTQRTAT (229 aa)). Residues 40-47 (GESGTGKE) and 103-112 (AHGGTLLLDE) each bind ATP. The H-T-H motif DNA-binding region spans 325 to 344 (QAKAARLLGRTPRQVGYSLR).

As to quaternary structure, interacts with sigma-54.

Its function is as follows. Required for activation of most nif operons, which are directly involved in nitrogen fixation. The protein is Nif-specific regulatory protein (nifA) of Rhizobium leguminosarum bv. trifolii.